The primary structure comprises 335 residues: N-acetylglucosaminyl-phosphatidylinositol de-N-acetylase (335 aa).

The chain crosses the membrane as a helical span at residues 3 to 23; sequence SAFTFLSLAIFPLALFIFWTL. 2 N-linked (GlcNAc...) asparagine glycosylation sites follow: asparagine 128 and asparagine 153.

Belongs to the PIGL family.

The protein resides in the endoplasmic reticulum membrane. It carries out the reaction a 6-(N-acetyl-alpha-D-glucosaminyl)-1-(1,2-diacyl-sn-glycero-3-phospho)-1D-myo-inositol + H2O = a 6-(alpha-D-glucosaminyl)-1-(1,2-diacyl-sn-glycero-3-phospho)-1D-myo-inositol + acetate. The protein operates within glycolipid biosynthesis; glycosylphosphatidylinositol-anchor biosynthesis. In terms of biological role, involved in the second step of GPI biosynthesis. De-N-acetylation of N-acetylglucosaminyl-phosphatidylinositol. The sequence is that of N-acetylglucosaminyl-phosphatidylinositol de-N-acetylase from Arthroderma benhamiae (strain ATCC MYA-4681 / CBS 112371) (Trichophyton mentagrophytes).